The primary structure comprises 789 residues: Disintegrin and metalloproteinase domain-containing protein 7 (789 aa).

The N-terminal stretch at M1–E25 is a signal peptide. The propeptide occupies G26–T176. N-linked (GlcNAc...) asparagine glycans are attached at residues N84, N167, and N174. The Extracellular portion of the chain corresponds to K177 to V668. Residues K199–P393 enclose the Peptidase M12B domain. 4 disulfides stabilise this stretch: C310–C388, C350–C372, C352–C357, and C459–C479. One can recognise a Disintegrin domain in the interval Y401–N487. N583, N628, and N664 each carry an N-linked (GlcNAc...) asparagine glycan. Residues S669–I689 form a helical membrane-spanning segment. Residues R690–G789 are Cytoplasmic-facing. Basic and acidic residues predominate over residues D762–Q771. The disordered stretch occupies residues D762 to G789. The span at N772–G789 shows a compositional bias: polar residues.

As to quaternary structure, interacts with ITM2B in sperm; the interaction increases following capacitation. Interacts with HSPA5 and CANX. Expressed specifically in the caput region of the epididymis (at protein level).

It localises to the membrane. In terms of biological role, required for normal male fertility via maintenance of epithelial cell morphology in the caput epididymis and subsequently correct epididymis lumen structure required for sperm development. Plays a role in sperm motility, flagella morphology and tyrosine phosphorylation during sperm capacitance. Plays a role in normal expression levels of HSPA5, ITM2B and ADAM2 in sperm both prior to and post-capacitation. This is a non catalytic metalloprotease-like protein. This Rattus norvegicus (Rat) protein is Disintegrin and metalloproteinase domain-containing protein 7.